Consider the following 124-residue polypeptide: Fluoride-specific ion channel FluC (124 aa).

The next 4 membrane-spanning stretches (helical) occupy residues 5 to 25 (ILAV…TGTW), 38 to 58 (TLAV…LFLL), 69 to 89 (GLIV…LDTL), and 99 to 119 (LALG…WAGL). Na(+)-binding residues include Gly-76 and Thr-79.

This sequence belongs to the fluoride channel Fluc/FEX (TC 1.A.43) family.

It localises to the cell inner membrane. The enzyme catalyses fluoride(in) = fluoride(out). With respect to regulation, na(+) is not transported, but it plays an essential structural role and its presence is essential for fluoride channel function. Functionally, fluoride-specific ion channel. Important for reducing fluoride concentration in the cell, thus reducing its toxicity. This Pseudomonas syringae pv. syringae (strain B728a) protein is Fluoride-specific ion channel FluC.